The following is a 68-amino-acid chain: MLFIPPPLLCLFIAIAMYFLPKIASYSVHFSVIVFVISLSFLIALSSVMQSLYVKPPLILVTLKAQQN.

2 consecutive transmembrane segments (helical) span residues 1–21 (MLFI…YFLP) and 28–48 (VHFS…LSSV).

Its subcellular location is the cell membrane. This is an uncharacterized protein from Haemophilus influenzae (strain ATCC 51907 / DSM 11121 / KW20 / Rd).